The chain runs to 26 residues: Acetylcholine receptor subunit delta (26 aa).

The protein belongs to the ligand-gated ion channel (TC 1.A.9) family. Acetylcholine receptor (TC 1.A.9.1) subfamily. In terms of assembly, pentamer of two alpha chains, and one each of the beta, delta, and gamma chains.

It localises to the postsynaptic cell membrane. It is found in the cell membrane. It catalyses the reaction K(+)(in) = K(+)(out). The catalysed reaction is Na(+)(in) = Na(+)(out). Functionally, after binding acetylcholine, the AChR responds by an extensive change in conformation that affects all subunits and leads to opening of an ion-conducting channel across the plasma membrane. This chain is Acetylcholine receptor subunit delta (chrnd), found in Electrophorus electricus (Electric eel).